A 285-amino-acid polypeptide reads, in one-letter code: Protein HtrL (285 aa).

This is Protein HtrL from Escherichia coli (strain K12).